Consider the following 394-residue polypeptide: Tubulin-like protein CetZ4 (394 aa).

GTP is bound by residues 10–14 (QAGGK), 110–112 (GTG), Glu142, Asn169, and Asn187.

The protein belongs to the CetZ family.

Its subcellular location is the cytoplasm. Functionally, involved in cell shape control. In Haloferax volcanii (strain ATCC 29605 / DSM 3757 / JCM 8879 / NBRC 14742 / NCIMB 2012 / VKM B-1768 / DS2) (Halobacterium volcanii), this protein is Tubulin-like protein CetZ4.